We begin with the raw amino-acid sequence, 924 residues long: Probable dipeptidyl-aminopeptidase B (924 aa).

Polar residues predominate over residues 1 to 12; the sequence is MPSTYSDDNTLR. A disordered region spans residues 1–102; it reads MPSTYSDDNT…RSNQRSSADG (102 aa). Residues 1 to 111 lie on the Cytoplasmic side of the membrane; it reads MPSTYSDDNT…GQRMDRSLRR (111 aa). A compositionally biased stretch (basic and acidic residues) spans 14–23; it reads GLDRFRDHSP. Residues 31–43 are compositionally biased toward polar residues; that stretch reads SQETDSTVSTTSI. The span at 47 to 58 shows a compositional bias: basic and acidic residues; the sequence is RIQERLDTKEFP. A compositionally biased stretch (low complexity) spans 87–100; the sequence is NASPSSRSNQRSSA. The chain crosses the membrane as a helical; Signal-anchor for type II membrane protein span at residues 112–132; the sequence is WLFIVSGALVATWVIGLIFFV. At 133-924 the chain is on the vacuolar side; that stretch reads SSKAYKPSSS…GMKRRALPTA (792 aa). 2 N-linked (GlcNAc...) asparagine glycosylation sites follow: asparagine 231 and asparagine 364. Residue serine 768 is the Charge relay system of the active site. Asparagine 827 carries N-linked (GlcNAc...) asparagine glycosylation. Active-site charge relay system residues include aspartate 845 and histidine 878.

This sequence belongs to the peptidase S9B family.

The protein resides in the vacuole membrane. It catalyses the reaction Release of an N-terminal dipeptide, Xaa-Yaa-|-Zaa-, from a polypeptide, preferentially when Yaa is Pro, provided Zaa is neither Pro nor hydroxyproline.. In terms of biological role, type IV dipeptidyl-peptidase which removes N-terminal dipeptides sequentially from polypeptides having unsubstituted N-termini provided that the penultimate residue is proline. In Neurospora crassa (strain ATCC 24698 / 74-OR23-1A / CBS 708.71 / DSM 1257 / FGSC 987), this protein is Probable dipeptidyl-aminopeptidase B (dapB).